The primary structure comprises 246 residues: 23S rRNA (guanosine-2'-O-)-methyltransferase RlmB (246 aa).

S-adenosyl-L-methionine is bound by residues Gly-197, Ile-217, and Leu-226.

The protein belongs to the class IV-like SAM-binding methyltransferase superfamily. RNA methyltransferase TrmH family. RlmB subfamily.

It localises to the cytoplasm. The catalysed reaction is guanosine(2251) in 23S rRNA + S-adenosyl-L-methionine = 2'-O-methylguanosine(2251) in 23S rRNA + S-adenosyl-L-homocysteine + H(+). In terms of biological role, specifically methylates the ribose of guanosine 2251 in 23S rRNA. The polypeptide is 23S rRNA (guanosine-2'-O-)-methyltransferase RlmB (Haemophilus ducreyi (strain 35000HP / ATCC 700724)).